A 317-amino-acid chain; its full sequence is Homoserine kinase (317 aa).

95–105 (PHSRGLGSSAA) lines the ATP pocket.

The protein belongs to the GHMP kinase family. Homoserine kinase subfamily.

The protein localises to the cytoplasm. The catalysed reaction is L-homoserine + ATP = O-phospho-L-homoserine + ADP + H(+). It functions in the pathway amino-acid biosynthesis; L-threonine biosynthesis; L-threonine from L-aspartate: step 4/5. In terms of biological role, catalyzes the ATP-dependent phosphorylation of L-homoserine to L-homoserine phosphate. The sequence is that of Homoserine kinase from Mycolicibacterium smegmatis (strain ATCC 700084 / mc(2)155) (Mycobacterium smegmatis).